Here is a 78-residue protein sequence, read N- to C-terminus: Large ribosomal subunit protein bL28 (78 aa).

Belongs to the bacterial ribosomal protein bL28 family.

This is Large ribosomal subunit protein bL28 from Prochlorococcus marinus (strain MIT 9312).